We begin with the raw amino-acid sequence, 378 residues long: Alpha-D-ribose 1-methylphosphonate 5-triphosphate diphosphatase (378 aa).

This sequence belongs to the metallo-dependent hydrolases superfamily.

The catalysed reaction is alpha-D-ribose 1-methylphosphonate 5-triphosphate + H2O = alpha-D-ribose 1-methylphosphonate 5-phosphate + diphosphate + H(+). Catalyzes the hydrolysis of alpha-D-ribose 1-methylphosphonate triphosphate (RPnTP) to form alpha-D-ribose 1-methylphosphonate phosphate (PRPn) and diphosphate. The polypeptide is Alpha-D-ribose 1-methylphosphonate 5-triphosphate diphosphatase (phnM) (Escherichia coli (strain K12)).